Here is a 56-residue protein sequence, read N- to C-terminus: Conotoxin Bu12 (56 aa).

A signal peptide spans 1 to 2 (TA). A propeptide spanning residues 3 to 25 (EDSRGTQLHRALRKATKLPVSTR) is cleaved from the precursor. Disulfide bonds link C26-C40, C33-C44, and C39-C49.

This sequence belongs to the conotoxin O1 superfamily. As to expression, expressed by the venom duct.

It is found in the secreted. The polypeptide is Conotoxin Bu12 (Conus bullatus (Bubble cone)).